We begin with the raw amino-acid sequence, 300 residues long: Transacylase cctO (300 aa).

A helical transmembrane segment spans residues 52-72 (IVYVSLTFFVVSIGLNFILAI). 2 short sequence motifs (HXXHC) span residues 185–189 (HQLGC) and 225–229 (HVDQC). An N-linked (GlcNAc...) asparagine glycan is attached at N270.

This sequence belongs to the ustYa family.

It localises to the membrane. The protein operates within mycotoxin biosynthesis. Transacylase; part of the gene cluster that mediates the biosynthesis of the mycotoxin cyclochlorotine, a hepatotoxic and carcinogenic cyclic chlorinated pentapeptide. Within the pathway, cctO catalyzes the intramolecular O,N-transacylation from isocyclochlorotine to cyclochlorotine. The NRPS cctN initially catalyzes the condensation of L-serine (Ser), Pro, L-2-aminobutyrate (2Abu), Ser, and beta-Phe in this order to produce isocyclotine. After the dichlorination of Pro2 catalyzed by cctP2 to produce isocyclochlorotine, the cctO-mediated transacylation of isocyclochlorotine can furnish cyclochlorotine. The subsequent hydroxylation of cyclochlorotine by cctR yields hydroxycyclochlorotine as the final product. CctP1 probably acts as a phenylalanine aminomutase and provides the uncommon building block beta-Phe. Furthermore, 2Abu can be synthesized from threonine by one of the threonine dehydratases and transaminases localized outside of the cluster. The functions of the remaining proteins encoded by the cluster, cctM and cctT, have not been identified yet. The chain is Transacylase cctO from Talaromyces islandicus (Penicillium islandicum).